Reading from the N-terminus, the 517-residue chain is Carotenoid phi-ring synthase (517 aa).

The disordered stretch occupies residues 1 to 24 (MFARDSGRGHRHGRDRQAAVVPAP). Residues alanine 45, 64-65 (ER), arginine 72, tyrosine 99, aspartate 461, and methionine 472 contribute to the FAD site.

It belongs to the carotenoid/retinoid oxidoreductase family. It depends on FAD as a cofactor.

It catalyses the reaction a carotenoid beta-end derivative + 2 A = a carotenoid phi-end derivative + 2 AH2. Its pathway is carotenoid biosynthesis. In terms of biological role, involved in the biosynthesis of isorenieratene, a carotenoid with aromatic end groups. Catalyzes the introduction of two additional double bonds into each ionone ring of beta-carotene to produce isorenieratene. The reaction includes an intramolecular methyl transfer from position C1 to position C2 of the ring. In Streptomyces griseus, this protein is Carotenoid phi-ring synthase.